A 98-amino-acid polypeptide reads, in one-letter code: Large ribosomal subunit protein uL23 (98 aa).

The protein belongs to the universal ribosomal protein uL23 family. As to quaternary structure, part of the 50S ribosomal subunit. Contacts protein L29, and trigger factor when it is bound to the ribosome.

Functionally, one of the early assembly proteins it binds 23S rRNA. One of the proteins that surrounds the polypeptide exit tunnel on the outside of the ribosome. Forms the main docking site for trigger factor binding to the ribosome. The chain is Large ribosomal subunit protein uL23 from Halorhodospira halophila (strain DSM 244 / SL1) (Ectothiorhodospira halophila (strain DSM 244 / SL1)).